The sequence spans 583 residues: Putative rhophilin-2-like protein RHPN2P1 (583 aa).

The BRO1 domain maps to 26-375 (PLIPLGLKET…RLTYAQHQED (350 aa)). The PDZ domain maps to 412–490 (RSNRFTAEEG…DEIEMKVVSL (79 aa)).

The polypeptide is Putative rhophilin-2-like protein RHPN2P1 (RHPN2P1) (Homo sapiens (Human)).